The chain runs to 1070 residues: DNA-directed RNA polymerase subunit beta (1070 aa).

It belongs to the RNA polymerase beta chain family. In terms of assembly, in plastids the minimal PEP RNA polymerase catalytic core is composed of four subunits: alpha, beta, beta', and beta''. When a (nuclear-encoded) sigma factor is associated with the core the holoenzyme is formed, which can initiate transcription.

Its subcellular location is the plastid. It localises to the chloroplast. The enzyme catalyses RNA(n) + a ribonucleoside 5'-triphosphate = RNA(n+1) + diphosphate. DNA-dependent RNA polymerase catalyzes the transcription of DNA into RNA using the four ribonucleoside triphosphates as substrates. This Gossypium barbadense (Sea Island cotton) protein is DNA-directed RNA polymerase subunit beta.